Reading from the N-terminus, the 155-residue chain is Small ribosomal subunit protein uS7cz/uS7cy (155 aa).

As to quaternary structure, component of the chloroplast small ribosomal subunit (SSU). Mature 70S chloroplast ribosomes of higher plants consist of a small (30S) and a large (50S) subunit. The 30S small subunit contains 1 molecule of ribosomal RNA (16S rRNA) and 24 different proteins. The 50S large subunit contains 3 rRNA molecules (23S, 5S and 4.5S rRNA) and 33 different proteins.

The protein resides in the plastid. The protein localises to the chloroplast. In terms of biological role, component of the chloroplast ribosome (chloro-ribosome), a dedicated translation machinery responsible for the synthesis of chloroplast genome-encoded proteins, including proteins of the transcription and translation machinery and components of the photosynthetic apparatus. This is Small ribosomal subunit protein uS7cz/uS7cy (rps7-A) from Spinacia oleracea (Spinach).